Reading from the N-terminus, the 198-residue chain is Photosystem I assembly protein Ycf4 (198 aa).

A disordered region spans residues 1-20; the sequence is MTASTTINKGDSPNGDSSAS. 2 consecutive transmembrane segments (helical) span residues 36-58 and 78-100; these read YWWA…SSYL and LVMG…VILW.

Belongs to the Ycf4 family.

Its subcellular location is the cellular thylakoid membrane. Seems to be required for the assembly of the photosystem I complex. This Nostoc sp. (strain PCC 7120 / SAG 25.82 / UTEX 2576) protein is Photosystem I assembly protein Ycf4.